The primary structure comprises 214 residues: Phosphoheptose isomerase (214 aa).

The SIS domain occupies 51–209; the sequence is IASTFEDGGK…IDLVERLLGY (159 aa). Substrate is bound at residue 66–68; that stretch reads NGG. His-75 and Glu-79 together coordinate Zn(2+). Residues Glu-79, 110 to 111, 136 to 138, Ser-141, and Gln-189 contribute to the substrate site; these read ND and STS. Gln-189 and His-197 together coordinate Zn(2+).

The protein belongs to the SIS family. GmhA subfamily. The cofactor is Zn(2+).

It is found in the cytoplasm. It catalyses the reaction 2 D-sedoheptulose 7-phosphate = D-glycero-alpha-D-manno-heptose 7-phosphate + D-glycero-beta-D-manno-heptose 7-phosphate. The protein operates within carbohydrate biosynthesis; D-glycero-D-manno-heptose 7-phosphate biosynthesis; D-glycero-alpha-D-manno-heptose 7-phosphate and D-glycero-beta-D-manno-heptose 7-phosphate from sedoheptulose 7-phosphate: step 1/1. Catalyzes the isomerization of sedoheptulose 7-phosphate in D-glycero-D-manno-heptose 7-phosphate. This is Phosphoheptose isomerase from Chlorobium limicola (strain DSM 245 / NBRC 103803 / 6330).